Here is a 950-residue protein sequence, read N- to C-terminus: MORC family CW-type zinc finger protein 1 (950 aa).

The stretch at 281-342 (KGKFKTEVQK…TKHKSLRQKQ (62 aa)) forms a coiled coil. The CW-type zinc finger occupies 465–530 (SLESLQWRRR…SCNQIERLPS (66 aa)). Residues C485, C488, C511, and C522 each coordinate Zn(2+). Disordered regions lie at residues 532–551 (PLGTVNRRPPSKDERERQLQ) and 679–700 (KKQQSESLVQAGKASTDVASSR). Positions 541–550 (PSKDERERQL) are enriched in basic and acidic residues. Residues 885-916 (LGQCELKRKRTEEKLSDLRAKLALLLQKLQLG) adopt a coiled-coil conformation.

Expressed at very low level in male germ cells.

It localises to the nucleus. Functionally, required for spermatogenesis. Essential for de novo DNA methylation and silencing of transposable elements in the male embryonic germ cells. Not required for piRNA biosynthesis. This Mus musculus (Mouse) protein is MORC family CW-type zinc finger protein 1.